The chain runs to 179 residues: Exosome complex component Csl4 (179 aa).

The 80-residue stretch at 58–137 folds into the S1 motif domain; the sequence is GDVVLGRVVD…RLSTKEEEMG (80 aa). Positions 143, 146, 159, and 162 each coordinate Zn(2+).

The protein belongs to the CSL4 family. As to quaternary structure, component of the archaeal exosome complex. Forms a trimer of Rrp4 and/or Csl4 subunits. The trimer associates with a hexameric ring-like arrangement composed of 3 Rrp41-Rrp42 heterodimers. Interacts with DnaG.

Its subcellular location is the cytoplasm. Non-catalytic component of the exosome, which is a complex involved in RNA degradation. Increases the RNA binding and the efficiency of RNA degradation. Helpful for the interaction of the exosome with A-poor RNAs. The sequence is that of Exosome complex component Csl4 from Archaeoglobus fulgidus (strain ATCC 49558 / DSM 4304 / JCM 9628 / NBRC 100126 / VC-16).